The chain runs to 315 residues: Gamma-hemolysin component C (315 aa).

An N-terminal signal peptide occupies residues 1–29; that stretch reads MLKNKILATTLSVSLLAPLANPLLENAKA.

It belongs to the aerolysin family. Toxicity requires sequential binding and synergistic association of a class S and a class F component which form heterooligomeric complexes. HlgC (class S) associates with HlgB (class F) thus forming an CB toxin.

Its function is as follows. Toxin that seems to act by forming pores in the membrane of the cell. Has a hemolytic and a leucotoxic activity. The polypeptide is Gamma-hemolysin component C (hlgC) (Staphylococcus aureus (strain Mu50 / ATCC 700699)).